The primary structure comprises 137 residues: ATP synthase epsilon chain (137 aa).

Belongs to the ATPase epsilon chain family. As to quaternary structure, F-type ATPases have 2 components, CF(1) - the catalytic core - and CF(0) - the membrane proton channel. CF(1) has five subunits: alpha(3), beta(3), gamma(1), delta(1), epsilon(1). CF(0) has three main subunits: a, b and c.

The protein resides in the cellular thylakoid membrane. Produces ATP from ADP in the presence of a proton gradient across the membrane. The polypeptide is ATP synthase epsilon chain (Nostoc punctiforme (strain ATCC 29133 / PCC 73102)).